Consider the following 142-residue polypeptide: Putative pre-16S rRNA nuclease (142 aa).

The protein belongs to the YqgF nuclease family.

The protein localises to the cytoplasm. Its function is as follows. Could be a nuclease involved in processing of the 5'-end of pre-16S rRNA. This is Putative pre-16S rRNA nuclease from Lactobacillus delbrueckii subsp. bulgaricus (strain ATCC BAA-365 / Lb-18).